The following is a 380-amino-acid chain: Tryptophan 2,3-dioxygenase (380 aa).

Residues 57–61 (FIITH) and Arg128 each bind substrate. Heme is bound at residue His313. Thr328 serves as a coordination point for substrate.

Belongs to the tryptophan 2,3-dioxygenase family. As to quaternary structure, homotetramer. Dimer of dimers. It depends on heme as a cofactor.

It carries out the reaction L-tryptophan + O2 = N-formyl-L-kynurenine. It functions in the pathway amino-acid degradation; L-tryptophan degradation via kynurenine pathway; L-kynurenine from L-tryptophan: step 1/2. The protein operates within pigment biosynthesis; ommochrome biosynthesis. Heme-dependent dioxygenase that catalyzes the oxidative cleavage of the L-tryptophan (L-Trp) pyrrole ring and converts L-tryptophan to N-formyl-L-kynurenine. Catalyzes the oxidative cleavage of the indole moiety. The sequence is that of Tryptophan 2,3-dioxygenase from Drosophila ananassae (Fruit fly).